Reading from the N-terminus, the 195-residue chain is ATP-dependent Clp protease proteolytic subunit 2 (195 aa).

Ser-98 acts as the Nucleophile in catalysis. His-123 is an active-site residue.

This sequence belongs to the peptidase S14 family. In terms of assembly, fourteen ClpP subunits assemble into 2 heptameric rings which stack back to back to give a disk-like structure with a central cavity, resembling the structure of eukaryotic proteasomes.

The protein resides in the cytoplasm. The enzyme catalyses Hydrolysis of proteins to small peptides in the presence of ATP and magnesium. alpha-casein is the usual test substrate. In the absence of ATP, only oligopeptides shorter than five residues are hydrolyzed (such as succinyl-Leu-Tyr-|-NHMec, and Leu-Tyr-Leu-|-Tyr-Trp, in which cleavage of the -Tyr-|-Leu- and -Tyr-|-Trp bonds also occurs).. Its function is as follows. Cleaves peptides in various proteins in a process that requires ATP hydrolysis. Has a chymotrypsin-like activity. Plays a major role in the degradation of misfolded proteins. ClpXP2 is involved in the complete degradation of the Site-2 clipped anti-sigma-W factor RsiW. This results in the release of SigW and the transcription activation of the genes under the control of the sigma-W factor. This Shouchella clausii (strain KSM-K16) (Alkalihalobacillus clausii) protein is ATP-dependent Clp protease proteolytic subunit 2.